We begin with the raw amino-acid sequence, 208 residues long: uncharacterized protein (208 aa).

The interval 124-208 (KKTGSSNART…PSFGKYSSLA (85 aa)) is disordered. Positions 133 to 170 (TPDEGKKAKNAPEEEKVKTSGSEDAKGEESAVEGKEPE) are enriched in basic and acidic residues.

It localises to the golgi apparatus. This is an uncharacterized protein from Encephalitozoon cuniculi (strain GB-M1) (Microsporidian parasite).